The sequence spans 221 residues: Growth hormone-releasing peptides (221 aa).

The signal sequence occupies residues 1-25 (MHLKIGTLTIRTIMLFTLCTFLTLF). A propeptide spanning residues 26–95 (AFSTCFDETK…QPENEFLQER (70 aa)) is cleaved from the precursor. Position 107 is a phenylalanine amide (phenylalanine 107). A propeptide spanning residues 110-127 (TSDDKIAKSIPSFDKIAK) is cleaved from the precursor. A phenylalanine amide mark is found at phenylalanine 136, phenylalanine 156, and phenylalanine 176. The propeptide occupies 179–221 (TPHSDRLQYEMNSHPLELKNPEEDSDRKKRQAMTFRIRTDLQM).

The protein belongs to the FARP (FMRFamide related peptide) family. Observed in the suprachiasmatic nucleus and in several telencephalic and diencephalic regions.

The protein resides in the secreted. Its function is as follows. Primary role is to release GH from the pituitary. May act as an endogenous ligand in the bullfrog hypothalamo-hypophysial system. This is Growth hormone-releasing peptides from Aquarana catesbeiana (American bullfrog).